A 307-amino-acid polypeptide reads, in one-letter code: Protein rep (307 aa).

Tyr219 is a DNA binding site.

Belongs to the Gram-positive plasmids replication protein type 1 family.

The sequence is that of Protein rep (repA) from Bacillus sp.